The sequence spans 181 residues: Ribonuclease HII (181 aa).

The region spanning Met-1–Ile-181 is the RNase H type-2 domain. Positions 6, 7, and 98 each coordinate a divalent metal cation.

It belongs to the RNase HII family. Requires Mn(2+) as cofactor. Mg(2+) serves as cofactor.

The protein localises to the cytoplasm. The catalysed reaction is Endonucleolytic cleavage to 5'-phosphomonoester.. Functionally, endonuclease that specifically degrades the RNA of RNA-DNA hybrids. In Borrelia duttonii (strain Ly), this protein is Ribonuclease HII.